The sequence spans 252 residues: 3-dehydroquinate dehydratase (252 aa).

Residues 46-48 (EWR) and arginine 82 each bind 3-dehydroquinate. The Proton donor/acceptor role is filled by histidine 143. Lysine 170 (schiff-base intermediate with substrate) is an active-site residue. 3-dehydroquinate is bound by residues arginine 212, serine 231, and glutamine 235.

It belongs to the type-I 3-dehydroquinase family. As to quaternary structure, homodimer.

The enzyme catalyses 3-dehydroquinate = 3-dehydroshikimate + H2O. Its pathway is metabolic intermediate biosynthesis; chorismate biosynthesis; chorismate from D-erythrose 4-phosphate and phosphoenolpyruvate: step 3/7. Its function is as follows. Involved in the third step of the chorismate pathway, which leads to the biosynthesis of aromatic amino acids. Catalyzes the cis-dehydration of 3-dehydroquinate (DHQ) and introduces the first double bond of the aromatic ring to yield 3-dehydroshikimate. This is 3-dehydroquinate dehydratase from Listeria monocytogenes serotype 4b (strain F2365).